The sequence spans 663 residues: Bicarbonate transport ATP-binding protein CmpC (663 aa).

The ABC transporter domain occupies 5 to 239; it reads VAVENIEKSF…RPRKRMDVVH (235 aa). Residue 42–49 participates in ATP binding; that stretch reads GHSGCGKS. The cmpA-like stretch occupies residues 281 to 663; sequence LEIGYVPLMA…LDQPRPIAAA (383 aa).

This sequence belongs to the ABC transporter superfamily. Nitrate/nitrite/cyanate uptake transporter (NitT) (TC 3.A.1.16) family. In terms of assembly, the complex is composed of two ATP-binding proteins (CmpC and CmpD), a transmembrane protein (CmpB) and a solute-binding protein (CmpA).

The protein localises to the cell inner membrane. Functionally, part of the ABC transporter complex CmpABCD involved in bicarbonate transport. Responsible for energy coupling to the transport system. This is Bicarbonate transport ATP-binding protein CmpC (cmpC) from Synechococcus elongatus (strain ATCC 33912 / PCC 7942 / FACHB-805) (Anacystis nidulans R2).